A 481-amino-acid chain; its full sequence is Hyaluronidase-4 (481 aa).

Residues 1–8 are Cytoplasmic-facing; it reads MKVLSEGQ. Residues 9-29 traverse the membrane as a helical segment; that stretch reads LKLCVVQPVHLTSWLLIFFIL. The Extracellular segment spans residues 30–453; that stretch reads KSISCLKPAR…ADCREIKTAD (424 aa). Cystine bridges form between cysteine 59–cysteine 351, cysteine 223–cysteine 237, cysteine 376–cysteine 387, cysteine 381–cysteine 435, and cysteine 437–cysteine 446. Asparagine 86 and asparagine 115 each carry an N-linked (GlcNAc...) asparagine glycan. The active-site Proton donor is glutamate 147. Residue asparagine 177 is glycosylated (N-linked (GlcNAc...) (complex) asparagine). N-linked (GlcNAc...) asparagine glycosylation is present at asparagine 343. A helical membrane pass occupies residues 454–474; that stretch reads GCSGVSPSPGSLMTLCLLLLA. Over 475–481 the chain is Cytoplasmic; that stretch reads SYRSIQL.

The protein belongs to the glycosyl hydrolase 56 family. Detected in placenta and skeletal muscle.

It is found in the membrane. The catalysed reaction is Random hydrolysis of (1-&gt;4)-linkages between N-acetyl-beta-D-glucosamine and D-glucuronate residues in hyaluronate.. In terms of biological role, endo-hyaluronidase that degrades hyaluronan to smaller oligosaccharide fragments. Also has chondroitin sulfate hydrolase activity, The best substrate being the galactosaminidic linkage in the sequence of a trisulfated tetrasaccharide. The sequence is that of Hyaluronidase-4 (HYAL4) from Homo sapiens (Human).